Consider the following 490-residue polypeptide: 2-succinylbenzoate--CoA ligase (490 aa).

Belongs to the ATP-dependent AMP-binding enzyme family. MenE subfamily.

The enzyme catalyses 2-succinylbenzoate + ATP + CoA = 2-succinylbenzoyl-CoA + AMP + diphosphate. It participates in quinol/quinone metabolism; 1,4-dihydroxy-2-naphthoate biosynthesis; 1,4-dihydroxy-2-naphthoate from chorismate: step 5/7. The protein operates within quinol/quinone metabolism; menaquinone biosynthesis. Converts 2-succinylbenzoate (OSB) to 2-succinylbenzoyl-CoA (OSB-CoA). The chain is 2-succinylbenzoate--CoA ligase from Geobacillus kaustophilus (strain HTA426).